The following is a 297-amino-acid chain: Oxidoreductase R1 (297 aa).

The protein belongs to the asaB hydroxylase/desaturase family.

Its pathway is secondary metabolite biosynthesis. In terms of biological role, oxidoreductase; part of the gene cluster that mediates the biosynthesis of squalestatin S1 (SQS1, also known as zaragozic acid A), a heavily oxidized fungal polyketide that offers potent cholesterol lowering activity by targeting squalene synthase (SS). SQS1 is composed of a 2,8-dioxobicyclic[3.2.1]octane-3,4,5-tricarboxyclic acid core that is connected to two lipophilic polyketide arms. These initial steps feature the priming of an unusual benzoic acid starter unit onto the highly reducing polyketide synthase pks2, followed by oxaloacetate extension and product release to generate a tricarboxylic acid containing product. The phenylalanine ammonia lyase (PAL) M7 and the acyl-CoA ligase M9 are involved in transforming phenylalanine into benzoyl-CoA. The citrate synthase-like protein R3 is involved in connecting the C-alpha-carbons of the hexaketide chain and oxaloacetate to afford the tricarboxylic acid unit. The potential hydrolytic enzymes, M8 and M10, are in close proximity to pks2 and may participate in product release. On the other side, the tetraketide arm is synthesized by a the squalestatin tetraketide synthase pks1 and enzymatically esterified to the core in the last biosynthetic step, by the acetyltransferase M4. The biosynthesis of the tetraketide must involve 3 rounds of chain extension. After the first and second rounds methyl-transfer occurs, and in all rounds of extension the ketoreductase and dehydratase are active. The enoyl reductase and C-MeT of pks1 are not active in the final round of extension. The acetyltransferase M4 appears to have a broad substrate selectivity for its acyl CoA substrate, allowing the in vitro synthesis of novel squalestatins. The biosynthesis of SQS1 requires several oxidative steps likely performed by oxidoreductases M1, R1 and R2. Finally, in support of the identification of the cluster as being responsible for SQS1 production, the cluster contains a gene encoding a putative squalene synthase (SS) R6, suggesting a likely mechanism for self-resistance. The polypeptide is Oxidoreductase R1 (Phoma sp. (strain ATCC 20986 / MF5453)).